A 180-amino-acid polypeptide reads, in one-letter code: NAD(P)H-quinone oxidoreductase subunit I, chloroplastic (180 aa).

4Fe-4S ferredoxin-type domains lie at 55 to 84 (GRIHFEFDKCIACEVCVRVCPIDLPVVDWK) and 95 to 124 (LNYSIDFGICIFCGNCVEYCPTNCLSMTEE). Residues cysteine 64, cysteine 67, cysteine 70, cysteine 74, cysteine 104, cysteine 107, cysteine 110, and cysteine 114 each coordinate [4Fe-4S] cluster.

It belongs to the complex I 23 kDa subunit family. As to quaternary structure, NDH is composed of at least 16 different subunits, 5 of which are encoded in the nucleus. Requires [4Fe-4S] cluster as cofactor.

It localises to the plastid. It is found in the chloroplast thylakoid membrane. It carries out the reaction a plastoquinone + NADH + (n+1) H(+)(in) = a plastoquinol + NAD(+) + n H(+)(out). The enzyme catalyses a plastoquinone + NADPH + (n+1) H(+)(in) = a plastoquinol + NADP(+) + n H(+)(out). NDH shuttles electrons from NAD(P)H:plastoquinone, via FMN and iron-sulfur (Fe-S) centers, to quinones in the photosynthetic chain and possibly in a chloroplast respiratory chain. The immediate electron acceptor for the enzyme in this species is believed to be plastoquinone. Couples the redox reaction to proton translocation, and thus conserves the redox energy in a proton gradient. This is NAD(P)H-quinone oxidoreductase subunit I, chloroplastic from Nandina domestica (Heavenly bamboo).